The chain runs to 201 residues: CASP-like protein 2B2 (201 aa).

Residues 1–28 (MSYLGVGVSPGNVSGSTTKMKLIDRKVR) are Cytoplasmic-facing. A helical membrane pass occupies residues 29 to 49 (VTELILRCLVCVLALVAAILI). Residues 50–71 (ATDVQVREIFMIQKKAKFTDMK) are Extracellular-facing. A helical membrane pass occupies residues 72–92 (ALVLLVVVNGIAAGYSLVQAV). At 93 to 108 (RCVVGLMKGRVLFSKP) the chain is on the cytoplasmic side. Residues 109–129 (LAWAIFFGDQAVAYLCVAGVA) traverse the membrane as a helical segment. The Extracellular portion of the chain corresponds to 130–166 (AAAQSAAFAKLGEPELQWMKICNMYGKFCNQVGEGIA). Residues 167–187 (SALFACIGMVLISCISAFGVF) traverse the membrane as a helical segment. Residues 188-201 (RLYGGSKSRPSSRW) lie on the Cytoplasmic side of the membrane.

This sequence belongs to the Casparian strip membrane proteins (CASP) family. Homodimer and heterodimers.

The protein localises to the cell membrane. This Arabidopsis thaliana (Mouse-ear cress) protein is CASP-like protein 2B2.